The chain runs to 253 residues: Coenzyme F420:L-glutamate ligase (253 aa).

Residues 9 to 12 (LPEI), 38 to 39 (ST), and K43 each bind GTP. D113 contributes to the a divalent metal cation binding site. N116 contacts GTP. The a divalent metal cation site is built by D148, T149, and E206. 204–211 (AGEGDDGT) contributes to the GTP binding site.

Belongs to the CofE family. Homodimer. The cofactor is Mg(2+). Mn(2+) is required as a cofactor. It depends on K(+) as a cofactor.

It catalyses the reaction oxidized coenzyme F420-0 + GTP + L-glutamate = oxidized coenzyme F420-1 + GDP + phosphate + H(+). The catalysed reaction is oxidized coenzyme F420-1 + GTP + L-glutamate = oxidized coenzyme F420-2 + GDP + phosphate + H(+). Its pathway is cofactor biosynthesis; coenzyme F420 biosynthesis. Functionally, catalyzes the GTP-dependent successive addition of two or more gamma-linked L-glutamates to the L-lactyl phosphodiester of 7,8-didemethyl-8-hydroxy-5-deazariboflavin (F420-0) to form coenzyme F420-0-glutamyl-glutamate (F420-2) or polyglutamated F420 derivatives. The polypeptide is Coenzyme F420:L-glutamate ligase (Natronomonas pharaonis (strain ATCC 35678 / DSM 2160 / CIP 103997 / JCM 8858 / NBRC 14720 / NCIMB 2260 / Gabara) (Halobacterium pharaonis)).